Consider the following 452-residue polypeptide: Scaffold protein ILK (452 aa).

M1 carries the post-translational modification N-acetylmethionine. ANK repeat units lie at residues 2–30, 31–63, 64–96, 97–129, and 130–174; these read DDIF…LNQG, DDHG…INVM, NRGD…INAV, NEHG…VSIC, and NKYG…GTTR. The interaction with LIMS1 stretch occupies residues 33–139; the sequence is HGFSPLHWAC…NKYGEMPVDK (107 aa). T173 bears the Phosphothreonine mark. Residues 180-212 are PH-like; mediates interaction with TGFB1I1; that stretch reads GTLNKHSGIDFKQLNFLAKLNENHSGELWKGRW. S186 carries the post-translational modification Phosphoserine. Residues 193–446 enclose the Protein kinase domain; it reads LNFLAKLNEN…PKFDMIVPIL (254 aa). ATP contacts are provided by N200, N202, H203, and S204. S246 is subject to Phosphoserine. ATP contacts are provided by H270, M272, and N279. Residue D339 coordinates Mg(2+). Residue K341 participates in ATP binding. A Nuclear localization signal motif is present at residues 363 to 371; the sequence is KKPEDTNRR. K426 bears the N6-acetyllysine mark.

Belongs to the protein kinase superfamily. TKL Ser/Thr protein kinase family. In terms of assembly, component of the heterotrimeric IPP (ILK-PINCH-PARVIN) complex composed of ILK, LIMS1/PINCH and PARVA; the complex binds to F-actin via the C-terminal tail of LIMS1 and the N-terminal region of PARVA, promoting F-actin filament bundling. Formation of the IPP complex is dependent on protein kinase C and precedes integrin-mediated cell adhesion and spreading. ILK also interacts with LIMS2/PINCH2 and with PARVB and PARVG which may substitute for LIMS1 and PARVA in the IPP complex; PARVA and PARVB compete for the same binding site. Interaction with PARVG promotes the establishment of cell polarity required for leukocyte migration. Interacts with the cytoplasmic domain of integrin ITGB1 and may also interact with integrins ITGB2, ITGB3 and/or ITGB5. Interacts probably also with TGFB1I1. Interacts (via ANK repeats) with EPHA1 (via SAM domain); stimulated by EFNA1 but independent of the kinase activity of EPHA1. Interacts with FERMT2. Interacts with LIMD2; leading to activate the protein kinase activity. Interacts with PXN/PAXILLIN (via LD motif 4). Interacts with CCDC25 (via cytoplasmic region); initiating the ILK-PARVB cascade to induce cytoskeleton rearrangement and directional migration of cells. Interacts with IQGAP1; the interaction is required for localization of IQGAP1 to the cell cortex. In terms of processing, phosphorylation by PAK1 modulates ILK subcellular location by promoting its nuclear export. As to expression, highly expressed in lung, heart, kidney, liver, brain, spleen and skeletal muscle. Weakly expressed in testis.

Its subcellular location is the cell junction. It is found in the focal adhesion. The protein resides in the cell membrane. It localises to the cytoplasm. The protein localises to the myofibril. Its subcellular location is the sarcomere. It is found in the cell projection. The protein resides in the lamellipodium. It localises to the nucleus. The protein localises to the cytoskeleton. Its subcellular location is the microtubule organizing center. It is found in the centrosome. The protein resides in the cell cortex. In terms of biological role, scaffold protein which mediates protein-protein interactions during a range of cellular events including focal adhesion assembly, cell adhesion and cell migration. Regulates integrin-mediated signal transduction by contributing to inside-out integrin activation. Recruits PARVA and LIMS1/PITCH to form the heterotrimeric IPP (ILK-PINCH-PARVIN) complex which binds to F-actin via the C-terminal tail of LIMS1 and the N-terminal region of PARVA, promoting F-actin filament bundling, a process required to generate force for actin cytoskeleton reorganization and subsequent dynamic cell adhesion events such as cell spreading and migration. Binding to PARVA promotes effective assembly of ILK into focal adhesions while PARVA-bound ILK can simultaneously engage integrin-beta cytoplasmic tails to mediate cell adhesion. Plays a role with PARVG in promoting the cell adhesion and spreading of leukocytes. Acts as an upstream effector of both AKT1/PKB and GSK3. Mediates trafficking of caveolae to the cell surface in an ITGB1-dependent manner by promoting the recruitment of IQGAP1 to the cell cortex which cooperates with its effector DIAPH1 to locally stabilize microtubules and allow stable insertion of caveolae into the plasma membrane. Required for the maintenance of mitotic spindle integrity by promoting phosphorylation of TACC3 by AURKA. Associates with chromatin and may act as a negative regulator of transcription when located in the nucleus. The chain is Scaffold protein ILK from Mus musculus (Mouse).